A 265-amino-acid chain; its full sequence is tRNA (guanine-N(1)-)-methyltransferase (265 aa).

Residues Gly119 and 139–144 (IGDYVL) contribute to the S-adenosyl-L-methionine site.

The protein belongs to the RNA methyltransferase TrmD family. Homodimer.

It localises to the cytoplasm. The catalysed reaction is guanosine(37) in tRNA + S-adenosyl-L-methionine = N(1)-methylguanosine(37) in tRNA + S-adenosyl-L-homocysteine + H(+). In terms of biological role, specifically methylates guanosine-37 in various tRNAs. This is tRNA (guanine-N(1)-)-methyltransferase from Alcanivorax borkumensis (strain ATCC 700651 / DSM 11573 / NCIMB 13689 / SK2).